A 541-amino-acid chain; its full sequence is Chaperonin GroEL 2 (541 aa).

ATP contacts are provided by residues 29 to 32, 86 to 90, Gly-413, 476 to 478, and Asp-492; these read TLGP, DGTTT, and NAA.

Belongs to the chaperonin (HSP60) family. Forms a cylinder of 14 subunits composed of two heptameric rings stacked back-to-back. Interacts with the co-chaperonin GroES.

It localises to the secreted. Its subcellular location is the capsule. It is found in the cell surface. The protein resides in the cell wall. The catalysed reaction is ATP + H2O + a folded polypeptide = ADP + phosphate + an unfolded polypeptide.. Together with its co-chaperonin GroES, plays an essential role in assisting protein folding. The GroEL-GroES system forms a nano-cage that allows encapsulation of the non-native substrate proteins and provides a physical environment optimized to promote and accelerate protein folding. This Mycolicibacterium paratuberculosis (strain ATCC BAA-968 / K-10) (Mycobacterium paratuberculosis) protein is Chaperonin GroEL 2.